The sequence spans 55 residues: DNA-binding protein (55 aa).

The disordered stretch occupies residues 1–55; it reads MVYRRRRRSSTGTTYGSTRRRRSSGYRRRPGRPRTYRRSRSRSSTGRRSYRTRYY. A run of 2 repeats spans residues 5–10 and 19–24. Residues 5–24 are 2 X 6 AA repeats of R-R-R-R-S-S; the sequence is RRRRSSTGTTYGSTRRRRSS. Over residues 18-41 the composition is skewed to basic residues; it reads TRRRRSSGYRRRPGRPRTYRRSRS.

Interacts with protein AC132. Phosphorylated.

The protein localises to the virion. Its subcellular location is the host cytoplasm. Its function is as follows. Plays a role in viral DNA packaging and nucleocapsid assembly. Promotes viral gene transcription during the late stage of infection while it is non-essential for the basal level of viral gene transcription. The protein is DNA-binding protein (P6.9) of Lepidoptera (butterflies and moths).